The chain runs to 428 residues: Light-independent protochlorophyllide reductase subunit N (428 aa).

[4Fe-4S] cluster contacts are provided by Cys30, Cys55, and Cys116.

Belongs to the BchN/ChlN family. In terms of assembly, protochlorophyllide reductase is composed of three subunits; BchL, BchN and BchB. Forms a heterotetramer of two BchB and two BchN subunits. [4Fe-4S] cluster serves as cofactor.

It carries out the reaction chlorophyllide a + oxidized 2[4Fe-4S]-[ferredoxin] + 2 ADP + 2 phosphate = protochlorophyllide a + reduced 2[4Fe-4S]-[ferredoxin] + 2 ATP + 2 H2O. It functions in the pathway porphyrin-containing compound metabolism; bacteriochlorophyll biosynthesis (light-independent). Functionally, component of the dark-operative protochlorophyllide reductase (DPOR) that uses Mg-ATP and reduced ferredoxin to reduce ring D of protochlorophyllide (Pchlide) to form chlorophyllide a (Chlide). This reaction is light-independent. The NB-protein (BchN-BchB) is the catalytic component of the complex. In Bradyrhizobium sp. (strain BTAi1 / ATCC BAA-1182), this protein is Light-independent protochlorophyllide reductase subunit N.